The sequence spans 160 residues: 3-hydroxyacyl-[acyl-carrier-protein] dehydratase FabZ (160 aa).

H60 is a catalytic residue.

The protein belongs to the thioester dehydratase family. FabZ subfamily.

It is found in the cytoplasm. It catalyses the reaction a (3R)-hydroxyacyl-[ACP] = a (2E)-enoyl-[ACP] + H2O. Involved in unsaturated fatty acids biosynthesis. Catalyzes the dehydration of short chain beta-hydroxyacyl-ACPs and long chain saturated and unsaturated beta-hydroxyacyl-ACPs. The polypeptide is 3-hydroxyacyl-[acyl-carrier-protein] dehydratase FabZ (Rhodospirillum rubrum (strain ATCC 11170 / ATH 1.1.1 / DSM 467 / LMG 4362 / NCIMB 8255 / S1)).